The chain runs to 274 residues: Large ribosomal subunit protein uL2 (274 aa).

Positions 223-274 (VAMNPVDHPHGGGEGRTSGGRHPVTPWGVPTKGYKTRSNKRTDKYIVRRRTK) are disordered.

This sequence belongs to the universal ribosomal protein uL2 family. As to quaternary structure, part of the 50S ribosomal subunit. Forms a bridge to the 30S subunit in the 70S ribosome.

Its function is as follows. One of the primary rRNA binding proteins. Required for association of the 30S and 50S subunits to form the 70S ribosome, for tRNA binding and peptide bond formation. It has been suggested to have peptidyltransferase activity; this is somewhat controversial. Makes several contacts with the 16S rRNA in the 70S ribosome. The sequence is that of Large ribosomal subunit protein uL2 from Shewanella amazonensis (strain ATCC BAA-1098 / SB2B).